Reading from the N-terminus, the 525-residue chain is 2,3-bisphosphoglycerate-independent phosphoglycerate mutase (525 aa).

Mn(2+) contacts are provided by Asp18 and Ser68. Ser68 functions as the Phosphoserine intermediate in the catalytic mechanism. Substrate is bound by residues His129, 159 to 160 (RD), Arg194, Arg200, 269 to 272 (RADR), and Lys345. Mn(2+) contacts are provided by Asp413, His417, Asp454, His455, and His473.

The protein belongs to the BPG-independent phosphoglycerate mutase family. In terms of assembly, monomer. Mn(2+) is required as a cofactor.

The enzyme catalyses (2R)-2-phosphoglycerate = (2R)-3-phosphoglycerate. Its pathway is carbohydrate degradation; glycolysis; pyruvate from D-glyceraldehyde 3-phosphate: step 3/5. In terms of biological role, catalyzes the interconversion of 2-phosphoglycerate and 3-phosphoglycerate. The chain is 2,3-bisphosphoglycerate-independent phosphoglycerate mutase from Chromohalobacter salexigens (strain ATCC BAA-138 / DSM 3043 / CIP 106854 / NCIMB 13768 / 1H11).